Reading from the N-terminus, the 287-residue chain is Immunoglobulin alpha Fc receptor (287 aa).

Positions 1–21 are cleaved as a signal peptide; that stretch reads MDPKQTTLLCLVLCLGQRIQA. At 22 to 227 the chain is on the extracellular side; sequence QEGDFPMPFI…SIHQDYTTQN (206 aa). Ig-like C2-type domains lie at 42–107 and 139–200; these read DGSV…IGHY and GENI…YNRS. An intrachain disulfide couples cysteine 49 to cysteine 100. Residues asparagine 65, asparagine 79, asparagine 141, asparagine 177, and asparagine 186 are each glycosylated (N-linked (GlcNAc...) asparagine). Cysteine 146 and cysteine 193 are disulfide-bonded. A helical transmembrane segment spans residues 228 to 246; sequence LIRMAVAGLVLVALLAILV. The Cytoplasmic portion of the chain corresponds to 247–287; that stretch reads ENWHSHTALNKEASADVAEPSWSQQMCQPGLTFARTPSVCK.

In terms of assembly, associates with the Fc epsilon RI gamma 2 receptor inducing tyrosine phosphorylation of gamma 2. As to quaternary structure, (Microbial infection) Interacts with Staphylococcus aureus protein SSL11. In terms of tissue distribution, isoform A.1, isoform A.2 and isoform A.3 are differentially expressed between blood and mucosal myeloid cells. Isoform A.1, isoform A.2 and isoform A.3 are expressed in monocytes. Isoform A.1 and isoform A.2 are expressed in alveolar macrophages; however only one isoform is expressed at alveolar macrophages surfaces.

It localises to the cell membrane. The protein resides in the secreted. Binds to the Fc region of immunoglobulins alpha. Mediates several functions including cytokine production. The polypeptide is Immunoglobulin alpha Fc receptor (FCAR) (Homo sapiens (Human)).